The sequence spans 199 residues: Large ribosomal subunit protein bL25 (199 aa).

This sequence belongs to the bacterial ribosomal protein bL25 family. CTC subfamily. As to quaternary structure, part of the 50S ribosomal subunit; part of the 5S rRNA/L5/L18/L25 subcomplex. Contacts the 5S rRNA. Binds to the 5S rRNA independently of L5 and L18.

In terms of biological role, this is one of the proteins that binds to the 5S RNA in the ribosome where it forms part of the central protuberance. This is Large ribosomal subunit protein bL25 from Nostoc punctiforme (strain ATCC 29133 / PCC 73102).